Consider the following 287-residue polypeptide: Probable glucose uptake protein GlcU (287 aa).

Helical transmembrane passes span leucine 7–glycine 29, isoleucine 34–phenylalanine 56, asparagine 58–glycine 75, tryptophan 114–leucine 136, methionine 156–valine 178, alanine 183–histidine 202, threonine 209–tyrosine 228, valine 233–phenylalanine 255, and threonine 267–leucine 286.

This sequence belongs to the GRP transporter (TC 2.A.7.5) family.

It localises to the cell membrane. Its function is as follows. Involved in the uptake of glucose. The sequence is that of Probable glucose uptake protein GlcU (glcU) from Staphylococcus aureus (strain MRSA252).